Consider the following 109-residue polypeptide: Putative double-stranded DNA mimic protein YciU (109 aa).

It belongs to the putative dsDNA mimic protein family.

Functionally, may act as a double-stranded DNA (dsDNA) mimic. Probably regulates the activity of a dsDNA-binding protein. In Salmonella arizonae (strain ATCC BAA-731 / CDC346-86 / RSK2980), this protein is Putative double-stranded DNA mimic protein YciU.